The primary structure comprises 372 residues: NAD(P)H-quinone oxidoreductase subunit 1 (372 aa).

8 consecutive transmembrane segments (helical) span residues 27-47, 97-117, 128-148, 176-196, 204-224, 266-286, 308-328, and 347-367; these read IIWL…GVLV, ILFT…WLIV, VGIG…GLLM, LALS…IDIV, ILSW…ICAL, ILSA…PIPV, SIGI…AILL, and FLLP…LALP.

This sequence belongs to the complex I subunit 1 family. As to quaternary structure, NDH-1 is composed of at least 11 different subunits.

It is found in the cellular thylakoid membrane. It carries out the reaction a plastoquinone + NADH + (n+1) H(+)(in) = a plastoquinol + NAD(+) + n H(+)(out). The enzyme catalyses a plastoquinone + NADPH + (n+1) H(+)(in) = a plastoquinol + NADP(+) + n H(+)(out). Its function is as follows. NDH-1 shuttles electrons from an unknown electron donor, via FMN and iron-sulfur (Fe-S) centers, to quinones in the respiratory and/or the photosynthetic chain. The immediate electron acceptor for the enzyme in this species is believed to be plastoquinone. Couples the redox reaction to proton translocation, and thus conserves the redox energy in a proton gradient. This is NAD(P)H-quinone oxidoreductase subunit 1 from Prochlorococcus marinus (strain MIT 9515).